Consider the following 181-residue polypeptide: Inner membrane-spanning protein YciB (181 aa).

5 consecutive transmembrane segments (helical) span residues 22-42, 50-70, 72-92, 118-138, and 148-168; these read IYTA…ILYF, MHLV…AFHD, AFIK…LAVS, VTWY…YVAF, and FKVF…VFYI.

This sequence belongs to the YciB family.

It localises to the cell inner membrane. Functionally, plays a role in cell envelope biogenesis, maintenance of cell envelope integrity and membrane homeostasis. The chain is Inner membrane-spanning protein YciB from Shewanella denitrificans (strain OS217 / ATCC BAA-1090 / DSM 15013).